The following is an 81-amino-acid chain: U-poneritoxin(01)-Om6a (81 aa).

The N-terminal stretch at 1–21 is a signal peptide; the sequence is MRRSYVLLAFAIVLIISIISA. Residues 22 to 43 constitute a propeptide that is removed on maturation; that stretch reads QVEADASSDAFADAVADAVADP. The residue at position 79 (Ala-79) is an Alanine amide.

Belongs to the formicidae venom precursor-01 superfamily. Truncated sequences of this peptide have also been found in the venom. It is possible they have been cleaved in the venom. Expressed by the venom gland.

It is found in the secreted. Its function is as follows. Cationic amphipathic alpha-helical peptide with antimicrobial activities against E.coli (MIC=3.1), and S.aureus (MIC=3.1 uM). Also shows histamine-releasing activity (33.6% at 10 uM). Does not have activity against S.cerevisiae. Does not show hemolytic activity, even at 50 uM. The sequence is that of U-poneritoxin(01)-Om6a from Odontomachus monticola (Trap-jaw ant).